The primary structure comprises 439 residues: Transmembrane protease serine 11F (439 aa).

At 1–33 (MMYAPVEFSQTAYPRIEYQRRQQQFWDPIRLAL) the chain is on the cytoplasmic side. Residues 34–54 (FTLAIVAIVGITIGIVTHFVV) form a helical; Signal-anchor for type II membrane protein membrane-spanning segment. Residues 55–439 (EDDKSFYYLA…RDWIASKTGL (385 aa)) are Extracellular-facing. Positions 58–176 (KSFYYLASFQ…PSFSLTPIDS (119 aa)) constitute an SEA domain. Residues 207-438 (IVQGRETAME…YRDWIASKTG (232 aa)) form the Peptidase S1 domain. Residues Cys-234 and Cys-250 are joined by a disulfide bond. Residues His-249 and Asp-294 each act as charge relay system in the active site. Disulfide bonds link Cys-359-Cys-375 and Cys-386-Cys-414. Catalysis depends on Ser-390, which acts as the Charge relay system.

Belongs to the peptidase S1 family.

The protein resides in the membrane. In terms of biological role, probable serine protease. In Mus musculus (Mouse), this protein is Transmembrane protease serine 11F (Tmprss11f).